The following is a 311-amino-acid chain: Malate dehydrogenase (311 aa).

NAD(+) is bound by residues 7 to 13 (GAAGGIG) and D34. Substrate-binding residues include R81 and R87. Residues N94 and 117-119 (ITN) contribute to the NAD(+) site. Positions 119 and 153 each coordinate substrate. H177 functions as the Proton acceptor in the catalytic mechanism. M227 contacts NAD(+).

It belongs to the LDH/MDH superfamily. MDH type 1 family. In terms of assembly, homodimer.

It carries out the reaction (S)-malate + NAD(+) = oxaloacetate + NADH + H(+). In terms of biological role, catalyzes the reversible oxidation of malate to oxaloacetate. This Aliivibrio fischeri (strain MJ11) (Vibrio fischeri) protein is Malate dehydrogenase.